We begin with the raw amino-acid sequence, 219 residues long: Octanoyltransferase (219 aa).

One can recognise a BPL/LPL catalytic domain in the interval 37–219 (EHSPDQLWIL…DFNDVQVILQ (183 aa)). Residues 76-83 (RGGQVTWH), 143-145 (SLG), and 156-158 (GLA) contribute to the substrate site. Cys174 serves as the catalytic Acyl-thioester intermediate.

Belongs to the LipB family.

It is found in the cytoplasm. The catalysed reaction is octanoyl-[ACP] + L-lysyl-[protein] = N(6)-octanoyl-L-lysyl-[protein] + holo-[ACP] + H(+). It functions in the pathway protein modification; protein lipoylation via endogenous pathway; protein N(6)-(lipoyl)lysine from octanoyl-[acyl-carrier-protein]: step 1/2. Functionally, catalyzes the transfer of endogenously produced octanoic acid from octanoyl-acyl-carrier-protein onto the lipoyl domains of lipoate-dependent enzymes. Lipoyl-ACP can also act as a substrate although octanoyl-ACP is likely to be the physiological substrate. This chain is Octanoyltransferase, found in Acinetobacter baylyi (strain ATCC 33305 / BD413 / ADP1).